Reading from the N-terminus, the 264-residue chain is 3-methyl-2-oxobutanoate hydroxymethyltransferase (264 aa).

D45 and D84 together coordinate Mg(2+). Residues 45–46, D84, and K112 contribute to the 3-methyl-2-oxobutanoate site; that span reads DS. E114 lines the Mg(2+) pocket. E181 functions as the Proton acceptor in the catalytic mechanism.

The protein belongs to the PanB family. As to quaternary structure, homodecamer; pentamer of dimers. The cofactor is Mg(2+).

The protein resides in the cytoplasm. The catalysed reaction is 3-methyl-2-oxobutanoate + (6R)-5,10-methylene-5,6,7,8-tetrahydrofolate + H2O = 2-dehydropantoate + (6S)-5,6,7,8-tetrahydrofolate. It participates in cofactor biosynthesis; (R)-pantothenate biosynthesis; (R)-pantoate from 3-methyl-2-oxobutanoate: step 1/2. Catalyzes the reversible reaction in which hydroxymethyl group from 5,10-methylenetetrahydrofolate is transferred onto alpha-ketoisovalerate to form ketopantoate. The polypeptide is 3-methyl-2-oxobutanoate hydroxymethyltransferase (Escherichia coli (strain K12 / MC4100 / BW2952)).